The chain runs to 624 residues: Cell pattern formation-associated protein ust1 (624 aa).

Disordered regions lie at residues 1–24 (MSTA…APTG) and 43–99 (RSGS…GHSS). Positions 43-62 (RSGSVPASASGSAPGSASGS) are enriched in low complexity. The span at 70–85 (QHHTGHHHYSAHHTHS) shows a compositional bias: basic residues. The region spanning 233–339 (RVTTTLWEDE…PNIQSFLYHP (107 aa)) is the HTH APSES-type domain. The H-T-H motif DNA-binding region spans 267–288 (GTKLLNVCGMSRGKRDGILKNE). The span at 352-362 (AQERQAQRQRA) shows a compositional bias: low complexity. 3 disordered regions span residues 352–456 (AQER…QQQQ), 474–504 (QQAY…LNNS), and 538–624 (SWND…IHHE). The segment covering 369–391 (PGANGTSQAPPLMRANTTPSNGD) has biased composition (polar residues). A compositionally biased stretch (low complexity) spans 392–426 (TSTFSSGLSSLGSWTGSHDQGHASAPTTAQPSPSS). The segment covering 427–451 (MHNGATQMHMSLSNHGTASPTYAQS) has biased composition (polar residues). Residues 571-587 (LDGDDLHSPDSSDDRLA) are compositionally biased toward basic and acidic residues. The segment covering 615-624 (VGNGSGIHHE) has biased composition (gly residues).

Belongs to the EFG1/PHD1/stuA family. Phosphorylated but is not a target of cAMP signaling.

It is found in the nucleus. Functionally, transcription factor that regulates asexual reproduction. Binds the StuA-response elements (StRE) with the consensus sequence 5'-(A/T)CGCG(T/A)N(A/C)-3' at the promoters of target genes. Regulates dimorphism, virulence, and the sporulation program. Required for mating, gall induction, and sporogenesis in maize tissue. Regulates expression of the filament-down-regulated gene UM00205 and the teliospore-specific gene ssp1. In Mycosarcoma maydis (Corn smut fungus), this protein is Cell pattern formation-associated protein ust1 (ust1).